Here is a 927-residue protein sequence, read N- to C-terminus: UPF0182 protein bll7333 (927 aa).

7 consecutive transmembrane segments (helical) span residues 17 to 37 (AVVG…LLAL), 65 to 85 (AVVF…NGWL), 134 to 154 (LALL…QFVY), 185 to 205 (WMML…LVHG), 220 to 240 (VIAH…WSFG), 264 to 284 (VGLP…LAAW), and 297 to 317 (AAFL…PVLF).

This sequence belongs to the UPF0182 family.

The protein localises to the cell membrane. The sequence is that of UPF0182 protein bll7333 from Bradyrhizobium diazoefficiens (strain JCM 10833 / BCRC 13528 / IAM 13628 / NBRC 14792 / USDA 110).